Consider the following 653-residue polypeptide: Acetyl-coenzyme A synthetase (653 aa).

CoA contacts are provided by residues Arg-195–Lys-198 and Thr-314. Residues Gly-390–Pro-392, Asp-414–Thr-419, Asp-505, and Arg-520 contribute to the ATP site. CoA is bound at residue Ser-528. Arg-531 serves as a coordination point for ATP. Mg(2+) contacts are provided by Val-542 and Val-547. The residue at position 617 (Lys-617) is an N6-acetyllysine.

Belongs to the ATP-dependent AMP-binding enzyme family. Mg(2+) serves as cofactor. Post-translationally, acetylated. Deacetylation by the SIR2-homolog deacetylase activates the enzyme.

The enzyme catalyses acetate + ATP + CoA = acetyl-CoA + AMP + diphosphate. Functionally, catalyzes the conversion of acetate into acetyl-CoA (AcCoA), an essential intermediate at the junction of anabolic and catabolic pathways. AcsA undergoes a two-step reaction. In the first half reaction, AcsA combines acetate with ATP to form acetyl-adenylate (AcAMP) intermediate. In the second half reaction, it can then transfer the acetyl group from AcAMP to the sulfhydryl group of CoA, forming the product AcCoA. This is Acetyl-coenzyme A synthetase from Pasteurella multocida (strain Pm70).